The following is a 491-amino-acid chain: Probable succinate-semialdehyde dehydrogenase [NADP(+)] (491 aa).

NADP(+)-binding positions include 163-164 (WN), 187-190 (KPAE), and 241-242 (GS). The active-site Proton acceptor is glutamate 263. Leucine 264 is a binding site for NADP(+). Cysteine 297 serves as the catalytic Nucleophile. Glutamate 394 contributes to the NADP(+) binding site.

The protein belongs to the aldehyde dehydrogenase family.

It carries out the reaction succinate semialdehyde + NADP(+) + H2O = succinate + NADPH + 2 H(+). Its pathway is amino-acid degradation; 4-aminobutanoate degradation. Its function is as follows. Catalyzes the NADP(+) dependent oxidation of succinate semialdehyde to succinate. The chain is Probable succinate-semialdehyde dehydrogenase [NADP(+)] (gabD) from Sinorhizobium fredii (strain NBRC 101917 / NGR234).